A 338-amino-acid polypeptide reads, in one-letter code: Solute carrier family 35 member B1 homolog (338 aa).

9 consecutive transmembrane segments (helical) span residues 9-29, 53-73, 84-104, 111-131, 135-155, 168-188, 213-233, 244-264, and 284-304; these read FVIY…VQEK, LALV…LLTI, GSYV…NMAM, TAVV…VLIG, YSWT…LFMY, TLLG…TGAV, LMLG…YFTI, LIAV…ASFG, and VLLF…LVFA. The short motif at 334–338 is the Di-lysine motif element; that stretch reads KKLNS.

It belongs to the nucleotide-sugar transporter family. SLC35B subfamily.

The protein resides in the endoplasmic reticulum membrane. In terms of biological role, probable sugar transporter. This chain is Solute carrier family 35 member B1 homolog (meigo), found in Drosophila melanogaster (Fruit fly).